A 153-amino-acid chain; its full sequence is Ribosomal RNA large subunit methyltransferase H (153 aa).

S-adenosyl-L-methionine contacts are provided by residues Ile75, Gly103, and Leu121–Phe126.

It belongs to the RNA methyltransferase RlmH family. Homodimer.

Its subcellular location is the cytoplasm. The enzyme catalyses pseudouridine(1915) in 23S rRNA + S-adenosyl-L-methionine = N(3)-methylpseudouridine(1915) in 23S rRNA + S-adenosyl-L-homocysteine + H(+). In terms of biological role, specifically methylates the pseudouridine at position 1915 (m3Psi1915) in 23S rRNA. This chain is Ribosomal RNA large subunit methyltransferase H, found in Helicobacter hepaticus (strain ATCC 51449 / 3B1).